A 141-amino-acid chain; its full sequence is Large ribosomal subunit protein bL17 (141 aa).

Belongs to the bacterial ribosomal protein bL17 family. Part of the 50S ribosomal subunit. Contacts protein L32.

This chain is Large ribosomal subunit protein bL17, found in Sinorhizobium fredii (strain NBRC 101917 / NGR234).